The primary structure comprises 50 residues: Protein PsbN (50 aa).

Residues 14–34 traverse the membrane as a helical segment; that stretch reads VAVTILAILLALTGFGLWTAF.

Belongs to the PsbN family.

It localises to the cellular thylakoid membrane. In terms of biological role, may play a role in photosystem I and II biogenesis. The sequence is that of Protein PsbN from Prochlorococcus marinus (strain MIT 9312).